Reading from the N-terminus, the 178-residue chain is Small ribosomal subunit protein uS5 (178 aa).

One can recognise an S5 DRBM domain in the interval 15–78 (FEEKIIEIRR…SAAKRNIIEV (64 aa)).

This sequence belongs to the universal ribosomal protein uS5 family. As to quaternary structure, part of the 30S ribosomal subunit. Contacts proteins S4 and S8.

In terms of biological role, with S4 and S12 plays an important role in translational accuracy. Functionally, located at the back of the 30S subunit body where it stabilizes the conformation of the head with respect to the body. The protein is Small ribosomal subunit protein uS5 of Thermotoga sp. (strain RQ2).